The chain runs to 169 residues: uncharacterized protein (169 aa).

The Nudix hydrolase domain maps to 28–157; it reads ELHLVVHVCI…EFIPYFFLNQ (130 aa). The short motif at 65-87 is the Nudix box element; sequence AGSALKGETSRQAAEREVKEELG. Positions 81 and 85 each coordinate Mg(2+).

This sequence belongs to the Nudix hydrolase family. It depends on Mg(2+) as a cofactor.

This is an uncharacterized protein from Listeria innocua serovar 6a (strain ATCC BAA-680 / CLIP 11262).